We begin with the raw amino-acid sequence, 64 residues long: Large ribosomal subunit protein bL32 (64 aa).

The segment covering 1-10 has biased composition (basic residues); that stretch reads MAVPKRKTTP. Positions 1-22 are disordered; sequence MAVPKRKTTPSKRDMRRANHDK. Over residues 11–22 the composition is skewed to basic and acidic residues; that stretch reads SKRDMRRANHDK.

It belongs to the bacterial ribosomal protein bL32 family.

The sequence is that of Large ribosomal subunit protein bL32 from Sorangium cellulosum (strain So ce56) (Polyangium cellulosum (strain So ce56)).